Here is a 503-residue protein sequence, read N- to C-terminus: MVSIRPDEISSIIRQQIESYDQTVTVSNVGTVLQVGDGTARIYGLEQAMAGELLEFEDGTVGIALNLEEDNVGAVLMGTGLDIQEGSTVKATGKIAQVPVGEALIGRVVDALGRPIDGKGDINTTETRLIESMAPGIVARKSVCEPMQTGITAIDAMIPVGRGQRELIIGDRKTGKTAIAIDTIINQKSEDVICVYVAIGQKASTVAQVIGTLEEKGAMAYTIVVAANANDPATLQYLAPYTGASMAEYFMYKGKATLVIYDDLSKQAQAYRQLSLLLKRPPGREAYPGDVFYIHSRLLERAAKLSDALGGGSMTALPVIETQAGDVSAYIPTNVISITDGQIFLSSDLFNSGFRPAINAGISVSRVGSAAQTKAMKQVAGKLKLELAQFAELEAFSQFASDLDAATQSQLARGQRLREVLKQPENSPLAVWEQVAIAYAGLNGYLDEIPVPKVSEFAAGLRDYIKTSKAKFADIVGSEKKLTDEAETLLKEAIAEYKQAFGV.

Residue 170–177 participates in ATP binding; the sequence is GDRKTGKT.

Belongs to the ATPase alpha/beta chains family. As to quaternary structure, F-type ATPases have 2 components, CF(1) - the catalytic core - and CF(0) - the membrane proton channel. CF(1) has five subunits: alpha(3), beta(3), gamma(1), delta(1), epsilon(1). CF(0) has four main subunits: a, b, b' and c.

The protein resides in the cellular thylakoid membrane. The enzyme catalyses ATP + H2O + 4 H(+)(in) = ADP + phosphate + 5 H(+)(out). In terms of biological role, produces ATP from ADP in the presence of a proton gradient across the membrane. The alpha chain is a regulatory subunit. This Rippkaea orientalis (strain PCC 8801 / RF-1) (Cyanothece sp. (strain PCC 8801)) protein is ATP synthase subunit alpha.